A 129-amino-acid polypeptide reads, in one-letter code: Small ribosomal subunit protein uS11 (129 aa).

The segment at 109–129 (VDDTPVPHNGCRPKKKFRKAS) is disordered. The segment covering 119 to 129 (CRPKKKFRKAS) has biased composition (basic residues).

It belongs to the universal ribosomal protein uS11 family. As to quaternary structure, part of the 30S ribosomal subunit. Interacts with proteins S7 and S18. Binds to the C-terminus of IF-3; however exactly how IF-3 interacts with the 30S subunit is unclear.

Functionally, located on the upper part of the platform of the 30S subunit, where it bridges several disparate RNA helices of the 16S rRNA. Forms part of the Shine-Dalgarno cleft in the 70S ribosome. This Thermus thermophilus (strain ATCC BAA-163 / DSM 7039 / HB27) protein is Small ribosomal subunit protein uS11 (rpsK).